A 125-amino-acid polypeptide reads, in one-letter code: Small ribosomal subunit protein bS6 (125 aa).

It belongs to the bacterial ribosomal protein bS6 family.

Binds together with bS18 to 16S ribosomal RNA. This chain is Small ribosomal subunit protein bS6 (rpsF), found in Campylobacter jejuni subsp. jejuni serotype O:2 (strain ATCC 700819 / NCTC 11168).